The sequence spans 636 residues: Epsin-3 (636 aa).

A 1,2-diacyl-sn-glycero-3-phospho-(1D-myo-inositol-4,5-bisphosphate)-binding residues include Arg-8, Lys-11, Arg-25, Asn-30, Arg-63, and His-73. In terms of domain architecture, ENTH spans 12–144 (NIVHNYSEAE…KDEERLRQER (133 aa)). The tract at residues 153–503 (RMALEGMGIG…TPESFLGPSA (351 aa)) is disordered. Positions 174 to 189 (GSPSSYTSASSSPRYA) are enriched in low complexity. Phosphoserine is present on residues Ser-184 and Ser-185. UIM domains follow at residues 202-221 (EEEL…AERP) and 229-248 (DEDL…HEKG). Composition is skewed to basic and acidic residues over residues 214–231 (SREE…RDED) and 242–256 (RQEH…KGDD). Position 257 is a phosphoserine (Ser-257). The span at 270–288 (RQRDREPEREERKEEEKLK) shows a compositional bias: basic and acidic residues. 5 tandem repeats follow at residues 315–317 (DPW), 338–340 (DPW), 365–367 (EPW), 381–383 (DPW), and 398–400 (DPW). Positions 315–400 (DPWDIPGLRP…KLPSTGADPW (86 aa)) are 5 X 3 AA repeats of [DE]-P-W. Residues 426-435 (ESTEPKESRD) are compositionally biased toward basic and acidic residues. A run of 2 repeats spans residues 523 to 525 (NPF) and 536 to 538 (NPF). Residues 523 to 635 (NPFLTGLGVP…LPPQAGTNPF (113 aa)) are 3 X 3 AA repeats of N-P-F. Residues 607–616 (PPPASLPQPL) are compositionally biased toward pro residues. Residues 607 to 636 (PPPASLPQPLLPTSGPMGPLPPQAGTNPFL) are disordered. Residues 633–635 (NPF) form repeat 3.

This sequence belongs to the epsin family.

It is found in the cytoplasm. The protein resides in the cell cortex. It localises to the perinuclear region. The protein localises to the cytoplasmic vesicle. Its subcellular location is the clathrin-coated vesicle. The sequence is that of Epsin-3 (Epn3) from Mus musculus (Mouse).